We begin with the raw amino-acid sequence, 336 residues long: Vomeronasal type-1 receptor 102 (336 aa).

Over 1-42 the chain is Extracellular; the sequence is MVGVQICQGMTSEILFFSLQPQFSNMMNKNSRLHIDSNIRNT. A helical membrane pass occupies residues 43–63; that stretch reads FFTEIGIGVSANSLLLLFNIF. Topologically, residues 64–75 are cytoplasmic; it reads KFIHGQRSRLTD. The chain crosses the membrane as a helical span at residues 76-96; it reads LPIGLLSLINLLMLLIMACIA. The Extracellular segment spans residues 97 to 120; the sequence is TDIFISCRRWDDIICKSLLYLYRT. A disulfide bridge connects residues C111 and C198. Residues 121-140 traverse the membrane as a helical segment; that stretch reads FRGLSLSTTCLLSVLQAIIL. The Cytoplasmic portion of the chain corresponds to 141–157; it reads SPRSSCLAKYKHKPPHH. Residues 158-178 form a helical membrane-spanning segment; the sequence is IFCAMLFLSVLYMFISSHLLL. Residues 179–213 lie on the Extracellular side of the membrane; that stretch reads SIIATPNLTTNDFIHVSQSCSILPMSYLMQSMFST. N-linked (GlcNAc...) asparagine glycosylation occurs at N185. A helical transmembrane segment spans residues 214-234; sequence LLAIRNVFLISLIVLSTWYMV. Residues 235–264 lie on the Cytoplasmic side of the membrane; sequence ALLCRHRKQTRHLQDTSLSRKASPEQRATR. The helical transmembrane segment at 265-285 threads the bilayer; sequence SILMLRSLFVLMSIFDSIVSC. At 286–296 the chain is on the extracellular side; that stretch reads SRTMYLNDPTS. The chain crosses the membrane as a helical span at residues 297-317; the sequence is YSIQLLVVHIYATVSPFVFMI. The Cytoplasmic portion of the chain corresponds to 318–336; the sequence is TEKHIVNYLKSMYVRVLNV.

It belongs to the G-protein coupled receptor 1 family. In terms of tissue distribution, expressed in 1-4% of neurons of the vomeronasal organ. Only one pheromone receptor gene may be expressed in a particular neuron. Not expressed in the main olfactory epithelium.

Its subcellular location is the cell membrane. Putative pheromone receptor implicated in the regulation of social as well as reproductive behavior. This is Vomeronasal type-1 receptor 102 (Vom1r102) from Rattus norvegicus (Rat).